Consider the following 513-residue polypeptide: Xylose import ATP-binding protein XylG (513 aa).

2 consecutive ABC transporter domains span residues 5-242 (LEMK…VGRE) and 259-505 (LRIE…LRSE). 37–44 (GENGSGKS) is a binding site for ATP.

The protein belongs to the ABC transporter superfamily. Xylose importer (TC 3.A.1.2.4) family. In terms of assembly, the complex is composed of two ATP-binding proteins (XylG), two transmembrane proteins (XylH) and a solute-binding protein (XylF).

The protein localises to the cell inner membrane. It catalyses the reaction D-xylose(out) + ATP + H2O = D-xylose(in) + ADP + phosphate + H(+). Part of the ABC transporter complex XylFGH involved in xylose import. Responsible for energy coupling to the transport system. This is Xylose import ATP-binding protein XylG from Escherichia coli O6:K15:H31 (strain 536 / UPEC).